The following is a 252-amino-acid chain: Triosephosphate isomerase (252 aa).

10–12 (NWK) contacts substrate. Histidine 96 serves as the catalytic Electrophile. The Proton acceptor role is filled by glutamate 168. Substrate-binding positions include glycine 174, serine 214, and 235-236 (GG).

The protein belongs to the triosephosphate isomerase family. In terms of assembly, homodimer.

The protein localises to the cytoplasm. It carries out the reaction D-glyceraldehyde 3-phosphate = dihydroxyacetone phosphate. It participates in carbohydrate biosynthesis; gluconeogenesis. Its pathway is carbohydrate degradation; glycolysis; D-glyceraldehyde 3-phosphate from glycerone phosphate: step 1/1. Its function is as follows. Seems to be capable of enhancing bacteriocin synthesis. Involved in the gluconeogenesis. Catalyzes stereospecifically the conversion of dihydroxyacetone phosphate (DHAP) to D-glyceraldehyde-3-phosphate (G3P). The polypeptide is Triosephosphate isomerase (Lactobacillus delbrueckii subsp. lactis).